Reading from the N-terminus, the 453-residue chain is MGSVLGLCSMASWIPCLCGSAPCLLCRCCPSGNNSTVTRLIYALFLLVGVCVACVMLIPGMEEQLNKIPGFCENEKGMVPCNILVGYKAVYRLCFGLAMFYLLLSLLMIKVKSSSDPRAAIHNGFWFFKFAAAIAIIIGAFFIPEGTFTTVWFYVGMAGAFCFILIQLVLLIDFAHSWNESWVEKMEEGNSRCWYAALLSATALNYLLSLVAVVLFFVYYTHPASCAENKAFISVNMLLCLGASIMSILPKIQESQPRSGLLQSSVITVYTMYLTWSAMTNEPETECNPSLLNIIGYNTTSTVSKEGQSVQWWHTQGIIGLILFLLCVFYSSIRTSNNSQVNKLTLTSDESTLIEDGGARNDGSLEDGDDVHRAVDNERDGVTYSYSFFHFMLFLASLYIMMTLTNWYRYEPSREMKSQWTAVWVKISSSWIGIVLYVWTLVAPLVLTNRDFD.

Gly2 carries N-myristoyl glycine lipidation. Topologically, residues 2-39 (GSVLGLCSMASWIPCLCGSAPCLLCRCCPSGNNSTVTR) are cytoplasmic. The chain crosses the membrane as a helical span at residues 40-60 (LIYALFLLVGVCVACVMLIPG). The Lumenal portion of the chain corresponds to 61-88 (MEEQLNKIPGFCENEKGMVPCNILVGYK). The chain crosses the membrane as a helical span at residues 89–109 (AVYRLCFGLAMFYLLLSLLMI). The Cytoplasmic portion of the chain corresponds to 110-123 (KVKSSSDPRAAIHN). A helical membrane pass occupies residues 124–144 (GFWFFKFAAAIAIIIGAFFIP). The Lumenal portion of the chain corresponds to 145-151 (EGTFTTV). The helical transmembrane segment at 152–172 (WFYVGMAGAFCFILIQLVLLI) threads the bilayer. Residues 173–197 (DFAHSWNESWVEKMEEGNSRCWYAA) lie on the Cytoplasmic side of the membrane. Residues 198-218 (LLSATALNYLLSLVAVVLFFV) form a helical membrane-spanning segment. The Lumenal portion of the chain corresponds to 219-231 (YYTHPASCAENKA). A helical membrane pass occupies residues 232 to 252 (FISVNMLLCLGASIMSILPKI). Residues 253-259 (QESQPRS) lie on the Cytoplasmic side of the membrane. The chain crosses the membrane as a helical span at residues 260-280 (GLLQSSVITVYTMYLTWSAMT). Over 281–309 (NEPETECNPSLLNIIGYNTTSTVSKEGQS) the chain is Lumenal. A helical membrane pass occupies residues 310–330 (VQWWHTQGIIGLILFLLCVFY). The Cytoplasmic portion of the chain corresponds to 331–387 (SSIRTSNNSQVNKLTLTSDESTLIEDGGARNDGSLEDGDDVHRAVDNERDGVTYSYS). Residue Ser351 is modified to Phosphoserine. Thr352 carries the phosphothreonine modification. Ser364 carries the post-translational modification Phosphoserine. A helical membrane pass occupies residues 388–408 (FFHFMLFLASLYIMMTLTNWY). Residues 409 to 426 (RYEPSREMKSQWTAVWVK) are Lumenal-facing. Residues 427–447 (ISSSWIGIVLYVWTLVAPLVL) traverse the membrane as a helical segment. Residues 448–453 (TNRDFD) lie on the Cytoplasmic side of the membrane.

Belongs to the TDE1 family. In terms of assembly, interacts with SPTLC1.

It localises to the endoplasmic reticulum membrane. Functionally, enhances the incorporation of serine into phosphatidylserine and sphingolipids. This chain is Serine incorporator 1 (SERINC1), found in Bos taurus (Bovine).